The chain runs to 246 residues: MNVVVVGATGRTGSEIVAEASERGHDVSGVARSQTSVGDVRVYPTEEFPELLDNADAVIDFTVPEATREHVQAAAAAGVPYVIGTTGFDDDGMAALRTASESTAVLKASNFARGVQALLRVVEAGVEALPEYDIELTETHHNGKRDAPSGTANTILDVVDETRDEALDRTHGREGEHRRGDDEVGVHVRRAGTVRGEHELLLAGNDEVLSLTHRAESRRVFAAGAVDAAEWLADRSAGWYDFEDTV.

Residues 7–12, 84–86, and 108–111 each bind NAD(+); these read GATGRT, GTT, and ASNF. Catalysis depends on His-140, which acts as the Proton donor/acceptor. His-141 provides a ligand contact to (S)-2,3,4,5-tetrahydrodipicolinate. Lys-144 (proton donor) is an active-site residue. 150 to 151 provides a ligand contact to (S)-2,3,4,5-tetrahydrodipicolinate; sequence GT.

This sequence belongs to the DapB family.

Its subcellular location is the cytoplasm. The catalysed reaction is (S)-2,3,4,5-tetrahydrodipicolinate + NAD(+) + H2O = (2S,4S)-4-hydroxy-2,3,4,5-tetrahydrodipicolinate + NADH + H(+). It catalyses the reaction (S)-2,3,4,5-tetrahydrodipicolinate + NADP(+) + H2O = (2S,4S)-4-hydroxy-2,3,4,5-tetrahydrodipicolinate + NADPH + H(+). It functions in the pathway amino-acid biosynthesis; L-lysine biosynthesis via DAP pathway; (S)-tetrahydrodipicolinate from L-aspartate: step 4/4. Functionally, catalyzes the conversion of 4-hydroxy-tetrahydrodipicolinate (HTPA) to tetrahydrodipicolinate. This chain is 4-hydroxy-tetrahydrodipicolinate reductase, found in Natronomonas pharaonis (strain ATCC 35678 / DSM 2160 / CIP 103997 / JCM 8858 / NBRC 14720 / NCIMB 2260 / Gabara) (Halobacterium pharaonis).